We begin with the raw amino-acid sequence, 282 residues long: Small ribosomal subunit protein uS2 (282 aa).

Residues 260–282 form a disordered region; that stretch reads KRRRSKVYKEEEREVVTNEDESR. The segment covering 266-282 has biased composition (basic and acidic residues); it reads VYKEEEREVVTNEDESR.

Belongs to the universal ribosomal protein uS2 family.

This chain is Small ribosomal subunit protein uS2, found in Wolbachia sp. subsp. Drosophila simulans (strain wRi).